The sequence spans 248 residues: Probable transcriptional regulatory protein Oant_1200 (248 aa).

Belongs to the TACO1 family.

It localises to the cytoplasm. This is Probable transcriptional regulatory protein Oant_1200 from Brucella anthropi (strain ATCC 49188 / DSM 6882 / CCUG 24695 / JCM 21032 / LMG 3331 / NBRC 15819 / NCTC 12168 / Alc 37) (Ochrobactrum anthropi).